Consider the following 71-residue polypeptide: Phenoloxidase 3 (71 aa).

Cu cation-binding residues include histidine 3 and histidine 29.

Belongs to the tyrosinase family. Cu(2+) is required as a cofactor. Upon activation, a trypsin type protease cleaves prophenol oxidase to yield the active enzyme. As to expression, hemocytes and plasma.

It localises to the secreted. It catalyses the reaction 2 L-dopa + O2 = 2 L-dopaquinone + 2 H2O. The enzyme catalyses L-tyrosine + O2 = L-dopaquinone + H2O. Functionally, this is a copper-containing oxidase that functions in the formation of pigments such as melanins and other polyphenolic compounds. Catalyzes the rate-limiting conversions of tyrosine to DOPA, DOPA to DOPA-quinone and possibly 5,6 dihydroxyindole to indole-5'6 quinone. This Sarcophaga argyrostoma (Flesh fly) protein is Phenoloxidase 3.